Consider the following 366-residue polypeptide: METGAVTGILNTTLAVVFTWVGYKTARIVWKYTPYSYPNARIKAMEAKLLSEQRFNELAESRTLNNFVVSLEDTDYKDYLASVSNYTVEEIERALERALAGTYELMVTILPKRVNPFFRLLLEEWDVRNITSVIKAKMVNEPASDYVVEIGTMLPKVKAMAEAKTMEEILVILEGTPYEEPYQKLLLGEISLKEFETELYRMYYAKLLNYALSKKEDERVILEEFVRLKIDKTNILTLLRAKAAKMGAEEIKPLIIPGGTIKLDSILHVDDLSMALAELDSTRYGAVIRDVREEVERDLSVLERALDRHIRERMNELTRFYPLSVATPLSYILQKEREVRKLRAIAKLIDDGVEPERIKELVGDAA.

It belongs to the V-ATPase V0D/AC39 subunit family. Has multiple subunits with at least A(3), B(3), C, D, E, F, H, I and proteolipid K(x).

It is found in the cell membrane. In terms of biological role, component of the A-type ATP synthase that produces ATP from ADP in the presence of a proton gradient across the membrane. This is A-type ATP synthase subunit C from Thermococcus onnurineus (strain NA1).